We begin with the raw amino-acid sequence, 809 residues long: Interleukin-4 receptor subunit alpha (809 aa).

Positions 1–25 (MGCLCPGLTLPVSCLILVWAAGSGS) are cleaved as a signal peptide. The Extracellular segment spans residues 26 to 231 (VKVLRLTACF…NYYEQPLEQR (206 aa)). Residues cysteine 34 and cysteine 44 are joined by a disulfide bond. Asparagine 53 and asparagine 71 each carry an N-linked (GlcNAc...) asparagine glycan. Cysteine 74 and cysteine 86 are disulfide-bonded. N-linked (GlcNAc...) asparagine glycans are attached at residues asparagine 112, asparagine 128, and asparagine 161. The Fibronectin type-III domain occupies 125–222 (APQNLTVHAI…EWSPSTTWHN (98 aa)). Position 163 is a phosphoserine (serine 163). N-linked (GlcNAc...) asparagine glycosylation is found at asparagine 175 and asparagine 208. The WSXWS motif signature appears at 211–215 (WSEWS). The helical transmembrane segment at 232–255 (LPLGVSISCVVILAICLSCYFSII) threads the bilayer. At 256–809 (KIKKEWWDQI…STGPTCTSAS (554 aa)) the chain is on the cytoplasmic side. Positions 261–269 (WWDQIPNPA) match the Box 1 motif motif. Disordered regions lie at residues 369-397 (ESEEEEVEEDRGSFCPSPESSGSGFQEGR) and 441-468 (SAGPQEAASQGEEQPLNPESNPLATLTQ). The segment covering 447–468 (AASQGEEQPLNPESNPLATLTQ) has biased composition (polar residues). Phosphotyrosine is present on tyrosine 488. The segment at 514 to 536 (LGQVDPSIPSAPQPSEPPTALQP) is disordered. Residues tyrosine 566, tyrosine 590, and tyrosine 618 each carry the phosphotyrosine modification. The tract at residues 606–674 (QSGVEASSGE…EPTVKGEDPR (69 aa)) is disordered. An ITIM motif motif is present at residues 695–700 (IVYSAL).

The protein belongs to the type I cytokine receptor family. Type 4 subfamily. In terms of assembly, the functional IL4 receptor is formed by initial binding of IL4 to IL4R. Subsequent recruitment to the complex of the common gamma chain, in immune cells, creates a type I receptor and, in non-immune cells, of IL13RA1 forms a type II receptor. IL4R can also interact with the IL13/IL13RA1 complex to form a similar type II receptor. Interacts with PIK3C3. Interacts with the SH2-containing phosphatases, PTPN6/SHIP1, PTPN11/SHIP2 and INPP5D/SHIP. Interacts with JAK1 through a Box 1-containing region; inhibited by SOCS5. Interacts with SOCS5; inhibits IL4 signaling. Interacts with JAK3. Interacts with CLM1. Interacts with IL13RA2. Post-translationally, on IL4 binding, phosphorylated on tyrosine residues in the cytoplasmic domain.

The protein localises to the cell membrane. The protein resides in the secreted. Its function is as follows. Receptor for both interleukin 4 and interleukin 13. Couples to the JAK1/2/3-STAT6 pathway. The IL4 response is involved in promoting Th2 differentiation. The IL4/IL13 responses are involved in regulating IgE production and, chemokine and mucus production at sites of allergic inflammation. In certain cell types, can signal through activation of insulin receptor substrates, IRS1/IRS2. The chain is Interleukin-4 receptor subunit alpha (IL4R) from Equus caballus (Horse).